A 1263-amino-acid polypeptide reads, in one-letter code: DNA topoisomerase 2 (1263 aa).

Residues asparagine 80, asparagine 109, 137–139, and 150–157 contribute to the ATP site; these read STN and GKNGFGAK. Residues 329–331 form an interaction with DNA region; it reads VKK. 362–364 contacts ATP; the sequence is QTK. The region spanning 439-553 is the Toprim domain; that stretch reads CTLILTEGDS…SLVKYEGFIQ (115 aa). Residues glutamate 445, aspartate 522, and aspartate 524 each coordinate Mg(2+). The region spanning 737–1223 is the Topo IIA-type catalytic domain; sequence VPNLMDGFKP…SPEEIWEEEL (487 aa). Catalysis depends on tyrosine 828, which acts as the O-(5'-phospho-DNA)-tyrosine intermediate. Positions 977-1015 are disordered; the sequence is KKASKAVSSAKNTKTTTKAGSKTGSRTRKNPALAKKSQK. Low complexity predominate over residues 981–1000; it reads KAVSSAKNTKTTTKAGSKTG. The interaction with DNA stretch occupies residues 1068–1077; the sequence is KLVKPLNLTN. The tract at residues 1244-1263 is disordered; sequence LLNKKKGSTGKKSRKTSTQK. A compositionally biased stretch (basic residues) spans 1247-1263; sequence KKKGSTGKKSRKTSTQK.

The protein belongs to the type II topoisomerase family. Mg(2+) serves as cofactor. It depends on Mn(2+) as a cofactor. The cofactor is Ca(2+).

The catalysed reaction is ATP-dependent breakage, passage and rejoining of double-stranded DNA.. In terms of biological role, can introduce negative superhelical turns into double-stranded circular DNA. This Acanthamoeba polyphaga (Amoeba) protein is DNA topoisomerase 2 (TOP2).